The sequence spans 194 residues: Adenylate kinase isoenzyme 1 (194 aa).

An N-acetylmethionine modification is found at methionine 1. 18-23 (GSGKGT) provides a ligand contact to ATP. Serine 38 bears the Phosphoserine mark. The interval 38–67 (STGDLLRAEVSSGSARGKMLSEIMEKGQLV) is NMP. Residues threonine 39, arginine 44, 65 to 67 (QLV), 94 to 97 (GYPR), and glutamine 101 each bind AMP. Residues 131–141 (KRGETSGRVDD) form an LID region. Residue arginine 132 participates in ATP binding. AMP-binding residues include arginine 138 and arginine 149. Position 177 (glycine 177) interacts with ATP.

Belongs to the adenylate kinase family. AK1 subfamily. As to quaternary structure, monomer. Mg(2+) is required as a cofactor.

It localises to the cytoplasm. The enzyme catalyses a ribonucleoside 5'-phosphate + ATP = a ribonucleoside 5'-diphosphate + ADP. It catalyses the reaction AMP + ATP = 2 ADP. The catalysed reaction is dAMP + ATP = dADP + ADP. It carries out the reaction dATP + AMP = dADP + ADP. The enzyme catalyses dAMP + dATP = 2 dADP. It catalyses the reaction a 2'-deoxyribonucleoside 5'-diphosphate + ATP = a 2'-deoxyribonucleoside 5'-triphosphate + ADP. The catalysed reaction is a ribonucleoside 5'-diphosphate + ATP = a ribonucleoside 5'-triphosphate + ADP. It carries out the reaction CDP + GTP = CTP + GDP. The enzyme catalyses GDP + ATP = GTP + ADP. It catalyses the reaction UDP + ATP = UTP + ADP. The catalysed reaction is GTP + UDP = UTP + GDP. It carries out the reaction dTDP + GTP = dTTP + GDP. The enzyme catalyses dCDP + GTP = dCTP + GDP. It catalyses the reaction dGDP + ATP = dGTP + ADP. The catalysed reaction is dADP + GTP = dATP + GDP. It carries out the reaction thiamine diphosphate + ADP = thiamine triphosphate + AMP. Catalyzes the reversible transfer of the terminal phosphate group between ATP and AMP. Also displays broad nucleoside diphosphate kinase activity. Plays an important role in cellular energy homeostasis and in adenine nucleotide metabolism. Also catalyzes at a very low rate the synthesis of thiamine triphosphate (ThTP) from thiamine diphosphate (ThDP) and ADP. This chain is Adenylate kinase isoenzyme 1, found in Bos taurus (Bovine).